Here is a 205-residue protein sequence, read N- to C-terminus: uncharacterized protein (205 aa).

Positions 1-42 (MSRKRDKPYTNRHTPARISKRRRPWAPSSSEHDEIIDKPITK) are disordered. Over residues 14-24 (TPARISKRRRP) the composition is skewed to basic residues. Over residues 30-40 (SEHDEIIDKPI) the composition is skewed to basic and acidic residues. Positions 47-122 (PALVVMGLPA…KKLEVVWATD (76 aa)) constitute an RRM domain. Residues 170-191 (PRSDNTKGISGDGGISSPATTS) form a disordered region.

This is an uncharacterized protein from Arabidopsis thaliana (Mouse-ear cress).